The sequence spans 77 residues: Conotoxin S6.11 (77 aa).

A signal peptide spans 1–19 (MEKLTILLLVAAVLMSTQA). The propeptide occupies 20 to 50 (LIQGGLDERQKAKSNFFSKRKSNAESWWEGE). 3 disulfide bridges follow: Cys-51–Cys-65, Cys-58–Cys-69, and Cys-64–Cys-74.

This sequence belongs to the conotoxin O2 superfamily. Expressed by the venom duct.

The protein resides in the secreted. This Conus striatus (Striated cone) protein is Conotoxin S6.11.